Consider the following 206-residue polypeptide: Cytochrome c oxidase assembly protein CtaG (206 aa).

The Cytoplasmic segment spans residues 1-17 (MPEVQPSALPKPAPRLG). A helical; Signal-anchor for type II membrane protein transmembrane segment spans residues 18–40 (RDAAVASICGFVVALMVGASFAA). The Periplasmic segment spans residues 41–206 (VPFYDWFCRT…GEPDQRKGNL (166 aa)).

This sequence belongs to the COX11/CtaG family.

The protein localises to the cell inner membrane. Functionally, exerts its effect at some terminal stage of cytochrome c oxidase synthesis, probably by being involved in the insertion of the copper B into subunit I. In Rhodopseudomonas palustris (strain BisB5), this protein is Cytochrome c oxidase assembly protein CtaG.